The sequence spans 73 residues: Large ribosomal subunit protein uL24 (73 aa).

Residues 51–65 (DDNPKGGFIHKEKPM) show a composition bias toward basic and acidic residues. The interval 51–73 (DDNPKGGFIHKEKPMHISNVKKA) is disordered.

Belongs to the universal ribosomal protein uL24 family. As to quaternary structure, part of the 50S ribosomal subunit.

Functionally, one of two assembly initiator proteins, it binds directly to the 5'-end of the 23S rRNA, where it nucleates assembly of the 50S subunit. One of the proteins that surrounds the polypeptide exit tunnel on the outside of the subunit. The sequence is that of Large ribosomal subunit protein uL24 from Helicobacter acinonychis (strain Sheeba).